A 251-amino-acid chain; its full sequence is Imidazole glycerol phosphate synthase subunit HisF (251 aa).

Active-site residues include Asp-11 and Asp-130.

This sequence belongs to the HisA/HisF family. Heterodimer of HisH and HisF.

The protein resides in the cytoplasm. The catalysed reaction is 5-[(5-phospho-1-deoxy-D-ribulos-1-ylimino)methylamino]-1-(5-phospho-beta-D-ribosyl)imidazole-4-carboxamide + L-glutamine = D-erythro-1-(imidazol-4-yl)glycerol 3-phosphate + 5-amino-1-(5-phospho-beta-D-ribosyl)imidazole-4-carboxamide + L-glutamate + H(+). It participates in amino-acid biosynthesis; L-histidine biosynthesis; L-histidine from 5-phospho-alpha-D-ribose 1-diphosphate: step 5/9. Functionally, IGPS catalyzes the conversion of PRFAR and glutamine to IGP, AICAR and glutamate. The HisF subunit catalyzes the cyclization activity that produces IGP and AICAR from PRFAR using the ammonia provided by the HisH subunit. The polypeptide is Imidazole glycerol phosphate synthase subunit HisF (Parabacteroides distasonis (strain ATCC 8503 / DSM 20701 / CIP 104284 / JCM 5825 / NCTC 11152)).